Consider the following 80-residue polypeptide: Exodeoxyribonuclease 7 small subunit (80 aa).

This sequence belongs to the XseB family. As to quaternary structure, heterooligomer composed of large and small subunits.

The protein resides in the cytoplasm. It catalyses the reaction Exonucleolytic cleavage in either 5'- to 3'- or 3'- to 5'-direction to yield nucleoside 5'-phosphates.. Bidirectionally degrades single-stranded DNA into large acid-insoluble oligonucleotides, which are then degraded further into small acid-soluble oligonucleotides. The chain is Exodeoxyribonuclease 7 small subunit from Rickettsia canadensis (strain McKiel).